The following is a 417-amino-acid chain: Glucose-1-phosphatase (417 aa).

The first 23 residues, 1–23 (MKYKVLTLCLSAALFAPIAPTMA), serve as a signal peptide directing secretion. A substrate-binding site is contributed by R41. H42 serves as the catalytic Nucleophile. Substrate-binding residues include R45, R118, and E220. D315 serves as the catalytic Proton donor.

The protein belongs to the histidine acid phosphatase family. In terms of assembly, homodimer.

The protein resides in the periplasm. The enzyme catalyses alpha-D-glucose 1-phosphate + H2O = D-glucose + phosphate. The protein is Glucose-1-phosphatase (agp) of Providencia rettgeri.